Here is a 258-residue protein sequence, read N- to C-terminus: Probable S-methyl-5'-thioinosine phosphorylase (258 aa).

Phosphate is bound at residue 53–54; the sequence is RH. Methionine 180 lines the substrate pocket. Threonine 181 is a phosphate binding site. 204 to 206 is a binding site for substrate; sequence NQA.

This sequence belongs to the PNP/MTAP phosphorylase family. MTAP subfamily. In terms of assembly, homotrimer.

The catalysed reaction is S-methyl-5'-thioinosine + phosphate = 5-(methylsulfanyl)-alpha-D-ribose 1-phosphate + hypoxanthine. It participates in purine metabolism; purine nucleoside salvage. In terms of biological role, catalyzes the reversible phosphorylation of S-methyl-5'-thioinosine (MTI) to hypoxanthine and 5-methylthioribose-1-phosphate. Involved in the breakdown of S-methyl-5'-thioadenosine (MTA), a major by-product of polyamine biosynthesis. Catabolism of (MTA) occurs via deamination to MTI and phosphorolysis to hypoxanthine. The chain is Probable S-methyl-5'-thioinosine phosphorylase from Methanosarcina acetivorans (strain ATCC 35395 / DSM 2834 / JCM 12185 / C2A).